Reading from the N-terminus, the 144-residue chain is 6,7-dimethyl-8-ribityllumazine synthase (144 aa).

5-amino-6-(D-ribitylamino)uracil contacts are provided by residues phenylalanine 21, 56 to 58 (AYE), and 80 to 82 (AVI). (2S)-2-hydroxy-3-oxobutyl phosphate is bound at residue 85–86 (GT). The active-site Proton donor is the histidine 88. Phenylalanine 113 is a 5-amino-6-(D-ribitylamino)uracil binding site. Residue arginine 127 coordinates (2S)-2-hydroxy-3-oxobutyl phosphate.

The protein belongs to the DMRL synthase family. As to quaternary structure, forms an icosahedral capsid composed of 60 subunits, arranged as a dodecamer of pentamers.

It catalyses the reaction (2S)-2-hydroxy-3-oxobutyl phosphate + 5-amino-6-(D-ribitylamino)uracil = 6,7-dimethyl-8-(1-D-ribityl)lumazine + phosphate + 2 H2O + H(+). The protein operates within cofactor biosynthesis; riboflavin biosynthesis; riboflavin from 2-hydroxy-3-oxobutyl phosphate and 5-amino-6-(D-ribitylamino)uracil: step 1/2. Catalyzes the formation of 6,7-dimethyl-8-ribityllumazine by condensation of 5-amino-6-(D-ribitylamino)uracil with 3,4-dihydroxy-2-butanone 4-phosphate. This is the penultimate step in the biosynthesis of riboflavin. The chain is 6,7-dimethyl-8-ribityllumazine synthase (ribH) from Photobacterium leiognathi.